A 762-amino-acid polypeptide reads, in one-letter code: 5-methyltetrahydropteroyltriglutamate--homocysteine methyltransferase (762 aa).

5-methyltetrahydropteroyltri-L-glutamate is bound by residues 17-20 and Lys111; that span reads REWK. Residues 435–437 and Glu488 each bind L-homocysteine; that span reads IGS. L-methionine contacts are provided by residues 435–437 and Glu488; that span reads IGS. Residues 519–520 and Trp565 each bind 5-methyltetrahydropteroyltri-L-glutamate; that span reads RC. Asp603 is an L-homocysteine binding site. Asp603 contributes to the L-methionine binding site. Glu609 provides a ligand contact to 5-methyltetrahydropteroyltri-L-glutamate. The Zn(2+) site is built by His645, Cys647, and Glu669. His698 serves as the catalytic Proton donor. Zn(2+) is bound at residue Cys730.

This sequence belongs to the vitamin-B12 independent methionine synthase family. It depends on Zn(2+) as a cofactor.

It catalyses the reaction 5-methyltetrahydropteroyltri-L-glutamate + L-homocysteine = tetrahydropteroyltri-L-glutamate + L-methionine. It functions in the pathway amino-acid biosynthesis; L-methionine biosynthesis via de novo pathway; L-methionine from L-homocysteine (MetE route): step 1/1. Its function is as follows. Catalyzes the transfer of a methyl group from 5-methyltetrahydrofolate to homocysteine resulting in methionine formation. The sequence is that of 5-methyltetrahydropteroyltriglutamate--homocysteine methyltransferase from Bacillus cereus (strain ZK / E33L).